Consider the following 93-residue polypeptide: UPF0058 protein AF_0738 (93 aa).

The protein belongs to the UPF0058 family.

This chain is UPF0058 protein AF_0738, found in Archaeoglobus fulgidus (strain ATCC 49558 / DSM 4304 / JCM 9628 / NBRC 100126 / VC-16).